A 1766-amino-acid polypeptide reads, in one-letter code: DNA-directed RNA polymerase II subunit RPB1-A (1766 aa).

The Zn(2+) site is built by C69, C72, C79, and H82. Positions 487, 489, and 491 each coordinate Mg(2+). Positions 813–825 are bridging helix; it reads PHEFFFHTMAGRE. A disordered region spans residues 1660–1766; it reads HAMSSAAPPS…EFGDEEEEEQ (107 aa). Residues 1706–1716 are compositionally biased toward basic and acidic residues; that stretch reads RGDEPSTHRSD. Residues 1742–1756 show a composition bias toward low complexity; that stretch reads PTAKTPQQAAPPTAA.

The protein belongs to the RNA polymerase beta' chain family. As to quaternary structure, component of the RNA polymerase II (Pol II) complex consisting of 12 subunits.

The protein localises to the nucleus. The catalysed reaction is RNA(n) + a ribonucleoside 5'-triphosphate = RNA(n+1) + diphosphate. Functionally, DNA-dependent RNA polymerase catalyzes the transcription of DNA into RNA using the four ribonucleoside triphosphates as substrates. Largest and catalytic component of RNA polymerase II which synthesizes mRNA precursors and many functional non-coding RNAs. Forms the polymerase active center together with the second largest subunit. Pol II is the central component of the basal RNA polymerase II transcription machinery. It is composed of mobile elements that move relative to each other. RPB1 is part of the core element with the central large cleft, the clamp element that moves to open and close the cleft and the jaws that are thought to grab the incoming DNA template. At the start of transcription, a single-stranded DNA template strand of the promoter is positioned within the central active site cleft of Pol II. A bridging helix emanates from RPB1 and crosses the cleft near the catalytic site and is thought to promote translocation of Pol II by acting as a ratchet that moves the RNA-DNA hybrid through the active site by switching from straight to bent conformations at each step of nucleotide addition. During transcription elongation, Pol II moves on the template as the transcript elongates. This is DNA-directed RNA polymerase II subunit RPB1-A (TRP4.8) from Trypanosoma brucei brucei.